Consider the following 341-residue polypeptide: 4-hydroxy-2-oxovalerate aldolase (341 aa).

The region spanning 5 to 257 is the Pyruvate carboxyltransferase domain; sequence ITLHDMTLRD…ETGVDVFRIA (253 aa). Substrate is bound at residue 13–14; sequence RD. Aspartate 14 is a Mn(2+) binding site. Residue histidine 17 is the Proton acceptor of the active site. Substrate is bound by residues serine 167 and histidine 196. Histidine 196 and histidine 198 together coordinate Mn(2+). Tyrosine 287 lines the substrate pocket.

This sequence belongs to the 4-hydroxy-2-oxovalerate aldolase family.

It catalyses the reaction (S)-4-hydroxy-2-oxopentanoate = acetaldehyde + pyruvate. The chain is 4-hydroxy-2-oxovalerate aldolase (mhpE) from Cupriavidus taiwanensis (strain DSM 17343 / BCRC 17206 / CCUG 44338 / CIP 107171 / LMG 19424 / R1) (Ralstonia taiwanensis (strain LMG 19424)).